The sequence spans 208 residues: Probable thymidylate kinase (208 aa).

9-16 (GIDGAGKS) lines the ATP pocket.

The protein belongs to the thymidylate kinase family.

It carries out the reaction dTMP + ATP = dTDP + ADP. In Thermococcus gammatolerans (strain DSM 15229 / JCM 11827 / EJ3), this protein is Probable thymidylate kinase.